We begin with the raw amino-acid sequence, 953 residues long: Serine/threonine-protein kinase ppk30 (953 aa).

Positions 57–326 (VIIQRYLSEG…IYQTLKEIME (270 aa)) constitute a Protein kinase domain. ATP-binding positions include 63-71 (LSEGGFSHV) and K85. D187 acts as the Proton acceptor in catalysis. Disordered stretches follow at residues 343 to 402 (ASTY…PSVS), 427 to 451 (SPIP…RRAD), 538 to 606 (RFLP…NRMN), 641 to 669 (RKEP…NKDV), 748 to 791 (STSQ…RPIG), and 864 to 953 (RKSC…ESLE). Polar residues-rich tracts occupy residues 355–369 (RTPS…SRPA), 378–402 (TVQT…PSVS), and 433–444 (KSYSATIQTPRS). Residues 547–557 (PSEFSSSVGSK) show a composition bias toward low complexity. A compositionally biased stretch (polar residues) spans 558 to 575 (QNLSMDIPSVQNVSTKQK). Positions 656–669 (LKKDQSSEVANKDV) are enriched in basic and acidic residues. The span at 748-766 (STSQVSHTQRLQQSISTSL) shows a compositional bias: polar residues. Composition is skewed to basic and acidic residues over residues 767 to 778 (ERVKSNTKKESN), 865 to 884 (KSCE…DLER), and 937 to 953 (PHIE…ESLE). A phosphoserine mark is found at S872 and S875.

The protein belongs to the protein kinase superfamily. Ser/Thr protein kinase family.

It localises to the cytoplasm. It catalyses the reaction L-seryl-[protein] + ATP = O-phospho-L-seryl-[protein] + ADP + H(+). The catalysed reaction is L-threonyl-[protein] + ATP = O-phospho-L-threonyl-[protein] + ADP + H(+). The sequence is that of Serine/threonine-protein kinase ppk30 (ppk30) from Schizosaccharomyces pombe (strain 972 / ATCC 24843) (Fission yeast).